Reading from the N-terminus, the 270-residue chain is Formamidopyrimidine-DNA glycosylase (270 aa).

Catalysis depends on Pro-2, which acts as the Schiff-base intermediate with DNA. The active-site Proton donor is Glu-3. Lys-58 functions as the Proton donor; for beta-elimination activity in the catalytic mechanism. Positions 92, 111, and 153 each coordinate DNA. The FPG-type zinc-finger motif lies at 238 to 270 (SVYGASVCPVCGGALRQIRLAQRGTWFCPRCQR). Arg-260 serves as the catalytic Proton donor; for delta-elimination activity.

Belongs to the FPG family. In terms of assembly, monomer. The cofactor is Zn(2+).

It catalyses the reaction Hydrolysis of DNA containing ring-opened 7-methylguanine residues, releasing 2,6-diamino-4-hydroxy-5-(N-methyl)formamidopyrimidine.. It carries out the reaction 2'-deoxyribonucleotide-(2'-deoxyribose 5'-phosphate)-2'-deoxyribonucleotide-DNA = a 3'-end 2'-deoxyribonucleotide-(2,3-dehydro-2,3-deoxyribose 5'-phosphate)-DNA + a 5'-end 5'-phospho-2'-deoxyribonucleoside-DNA + H(+). Functionally, involved in base excision repair of DNA damaged by oxidation or by mutagenic agents. Acts as a DNA glycosylase that recognizes and removes damaged bases. Has a preference for oxidized purines, such as 7,8-dihydro-8-oxoguanine (8-oxoG). Has AP (apurinic/apyrimidinic) lyase activity and introduces nicks in the DNA strand. Cleaves the DNA backbone by beta-delta elimination to generate a single-strand break at the site of the removed base with both 3'- and 5'-phosphates. This Halorhodospira halophila (strain DSM 244 / SL1) (Ectothiorhodospira halophila (strain DSM 244 / SL1)) protein is Formamidopyrimidine-DNA glycosylase.